Consider the following 326-residue polypeptide: Vacuolar protein sorting-associated protein 26A (326 aa).

The protein belongs to the VPS26 family. Component of the heterotrimeric retromer cargo-selective complex (CSC) which is believed to associate with variable sorting nexins to form functionally distinct retromer complex variants.

It localises to the cytoplasm. It is found in the endosome membrane. The protein localises to the early endosome. In terms of biological role, acts as a component of the retromer cargo-selective complex (CSC). The CSC is believed to be the core functional component of retromer or respective retromer complex variants acting to prevent missorting of selected transmembrane cargo proteins into the lysosomal degradation pathway. Retromer mediates retrograde transport of cargo proteins from endosomes to the trans-Golgi network (TGN). The polypeptide is Vacuolar protein sorting-associated protein 26A (vps26a) (Xenopus tropicalis (Western clawed frog)).